Here is a 157-residue protein sequence, read N- to C-terminus: Thiosulfate sulfurtransferase/rhodanese-like domain-containing protein 3 (157 aa).

In terms of domain architecture, Rhodanese spans 52–154; the sequence is NSKDIMLIDV…WVTYEISEEK (103 aa). At Lys96 the chain carries N6-succinyllysine. Cys114 acts as the Cysteine persulfide intermediate in catalysis.

The chain is Thiosulfate sulfurtransferase/rhodanese-like domain-containing protein 3 (Tstd3) from Mus musculus (Mouse).